The primary structure comprises 63 residues: ComG operon repressor (63 aa).

In terms of biological role, negatively regulates the transcription of the comG operon. In Bacillus subtilis (strain 168), this protein is ComG operon repressor (comZ).